Reading from the N-terminus, the 113-residue chain is U11-theraphotoxin-Hhn1k (113 aa).

Positions 1 to 21 (MNTVRVTFLLVFVLAVSLGQA) are cleaved as a signal peptide. The propeptide occupies 22–74 (DKDENRMEMQEKTEQGKSYLDFAENLLLQKLEELEAKLLEEDSEESRNSRQKR). The segment at 61-83 (EEDSEESRNSRQKRCIGEGVPCD) is disordered. 3 disulfide bridges follow: Cys75–Cys90, Cys82–Cys95, and Cys89–Cys110.

The protein belongs to the neurotoxin 14 (magi-1) family. 01 (HNTX-16) subfamily. As to expression, expressed by the venom gland.

It localises to the secreted. Probable ion channel inhibitor. The sequence is that of U11-theraphotoxin-Hhn1k from Cyriopagopus hainanus (Chinese bird spider).